Consider the following 582-residue polypeptide: ATP-dependent lipid A-core flippase (582 aa).

The next 5 helical transmembrane spans lie at 25–45 (WFML…QAGA), 64–84 (VLIV…GQFM), 142–162 (AIIV…FLLW), 165–185 (WKLT…MNIT), and 253–273 (VIVQ…YIHL). One can recognise an ABC transmembrane type-1 domain in the interval 29–309 (VISVIGYALY…LTDVNVKVQR (281 aa)). The 236-residue stretch at 342-577 (IDFEGVSFGY…NGLYTQMYRM (236 aa)) folds into the ABC transporter domain. Residue 375-382 (GRSGAGKS) coordinates ATP.

The protein belongs to the ABC transporter superfamily. Lipid exporter (TC 3.A.1.106) family. In terms of assembly, homodimer.

The protein localises to the cell inner membrane. It catalyses the reaction ATP + H2O + lipid A-core oligosaccharideSide 1 = ADP + phosphate + lipid A-core oligosaccharideSide 2.. Involved in lipopolysaccharide (LPS) biosynthesis. Translocates lipid A-core from the inner to the outer leaflet of the inner membrane. Transmembrane domains (TMD) form a pore in the inner membrane and the ATP-binding domain (NBD) is responsible for energy generation. The polypeptide is ATP-dependent lipid A-core flippase (Alcanivorax borkumensis (strain ATCC 700651 / DSM 11573 / NCIMB 13689 / SK2)).